The sequence spans 353 residues: Putative actin-28 (353 aa).

The protein belongs to the actin family.

Its subcellular location is the cytoplasm. The protein localises to the cytoskeleton. The catalysed reaction is ATP + H2O = ADP + phosphate + H(+). Its function is as follows. Actins are highly conserved proteins that are involved in various types of cell motility and are ubiquitously expressed in all eukaryotic cells. Multiple isoforms are involved in various cellular functions such as cytoskeleton structure, cell mobility, chromosome movement and muscle contraction. The protein is Putative actin-28 (act28) of Dictyostelium discoideum (Social amoeba).